A 314-amino-acid polypeptide reads, in one-letter code: E3 ubiquitin-protein ligase SINA-like 11 (314 aa).

The span at 1–12 (MEDSNSHPQNQT) shows a compositional bias: polar residues. Residues 1 to 31 (MEDSNSHPQNQTSKRKSSHPQKKQRMENETR) are disordered. Residues 13 to 23 (SKRKSSHPQKK) are compositionally biased toward basic residues. Residues 43–81 (CPVCFEPLTIPTFQCDDGHIVCNFCFAKVSNKCPGPGCD) form an RING-type; degenerate zinc finger. An SBD region spans residues 95–280 (VLESAFVPCQ…PANEVQQVTI (186 aa)). The SIAH-type zinc finger occupies 98–156 (SAFVPCQNTEFGCTKSVSYEKVSSHEKECNYSQCSCPNLECNYTGSYNIIYGHFMRRHL). 8 residues coordinate Zn(2+): cysteine 103, cysteine 110, histidine 122, cysteine 126, cysteine 133, cysteine 138, histidine 150, and histidine 155.

It belongs to the SINA (Seven in absentia) family.

It carries out the reaction S-ubiquitinyl-[E2 ubiquitin-conjugating enzyme]-L-cysteine + [acceptor protein]-L-lysine = [E2 ubiquitin-conjugating enzyme]-L-cysteine + N(6)-ubiquitinyl-[acceptor protein]-L-lysine.. It participates in protein modification; protein ubiquitination. E3 ubiquitin-protein ligase that mediates ubiquitination and subsequent proteasomal degradation of target proteins. E3 ubiquitin ligases accept ubiquitin from an E2 ubiquitin-conjugating enzyme in the form of a thioester and then directly transfers the ubiquitin to targeted substrates. It probably triggers the ubiquitin-mediated degradation of different substrates. This Arabidopsis thaliana (Mouse-ear cress) protein is E3 ubiquitin-protein ligase SINA-like 11.